Reading from the N-terminus, the 31-residue chain is Sarcolipin (31 aa).

At 1–7 (MERSTRE) the chain is on the cytoplasmic side. Residues 8-26 (LCLNFTVVLITVILIWLLV) traverse the membrane as a helical segment. At 27-31 (RSYQY) the chain is on the lumenal side.

Belongs to the sarcolipin family. As to quaternary structure, homooligomer. Can also form heterooligomers with other sarcoplasmic/endoplasmic reticulum calcium ATPase (SERCA) regulators ARLN, ERLN, PLN and STRIT1/DWORF. Monomer. Interacts with calcium ATPase ATP2A1/SERCA1. Interacts as a monomer with ATP2A2/SERCA2; the interaction decreases ATP2A2 Ca(2+) affinity. Interacts with VMP1; VMP1 competes with PLN and SLN to prevent them from forming an inhibitory complex with ATP2A2. As to expression, skeletal muscle (at protein level).

Its subcellular location is the sarcoplasmic reticulum membrane. The protein localises to the endoplasmic reticulum membrane. Reversibly inhibits the activity of ATP2A1/SERCA1 and ATP2A2/SERCA2 in sarcoplasmic reticulum by decreasing the apparent affinity of the ATPase for Ca(2+). Also inhibits the activity of ATP2A3/SERCA3. Modulates calcium re-uptake during muscle relaxation and plays an important role in calcium homeostasis in muscle. Required for muscle-based, non-shivering thermogenesis. The sequence is that of Sarcolipin (SLN) from Oryctolagus cuniculus (Rabbit).